The sequence spans 87 residues: Translation initiation factor IF-1 2 (87 aa).

The S1-like domain occupies 1 to 72 (MAKEELLELD…TKGRINFRHK (72 aa)).

Belongs to the IF-1 family. In terms of assembly, component of the 30S ribosomal translation pre-initiation complex which assembles on the 30S ribosome in the order IF-2 and IF-3, IF-1 and N-formylmethionyl-tRNA(fMet); mRNA recruitment can occur at any time during PIC assembly.

Its subcellular location is the cytoplasm. Its function is as follows. One of the essential components for the initiation of protein synthesis. Stabilizes the binding of IF-2 and IF-3 on the 30S subunit to which N-formylmethionyl-tRNA(fMet) subsequently binds. Helps modulate mRNA selection, yielding the 30S pre-initiation complex (PIC). Upon addition of the 50S ribosomal subunit IF-1, IF-2 and IF-3 are released leaving the mature 70S translation initiation complex. The protein is Translation initiation factor IF-1 2 of Burkholderia ambifaria (strain ATCC BAA-244 / DSM 16087 / CCUG 44356 / LMG 19182 / AMMD) (Burkholderia cepacia (strain AMMD)).